The primary structure comprises 113 residues: UPF0482 protein KPN78578_15540 (113 aa).

The first 28 residues, 1–28 (MNMTLNKRWCLTAILALSAVVYTSSSYA), serve as a signal peptide directing secretion. Residues 38–60 (GDSAQSRQQASMEKEQWNDTRSL) form a disordered region. Residues 39–48 (DSAQSRQQAS) are compositionally biased toward polar residues. A compositionally biased stretch (basic and acidic residues) spans 49–59 (MEKEQWNDTRS).

The protein belongs to the UPF0482 family.

This chain is UPF0482 protein KPN78578_15540, found in Klebsiella pneumoniae subsp. pneumoniae (strain ATCC 700721 / MGH 78578).